A 29-amino-acid polypeptide reads, in one-letter code: Galanin (29 aa).

Alanine 29 is modified (alanine amide).

Belongs to the galanin family.

It is found in the secreted. Contracts smooth muscle of the gastrointestinal and genitourinary tract, regulates growth hormone release, modulates insulin release, and may be involved in the control of adrenal secretion. The chain is Galanin (gal) from Oncorhynchus mykiss (Rainbow trout).